Consider the following 293-residue polypeptide: GTPase Era (293 aa).

Positions 5–174 (RTISVCIIGR…ITGKAQIAPW (170 aa)) constitute an Era-type G domain. Residues 13–20 (GRPNSGKS) are G1. Residue 13–20 (GRPNSGKS) participates in GTP binding. The G2 stretch occupies residues 39-43 (QTTRS). The tract at residues 60–63 (DTPG) is G3. Residues 60-64 (DTPGI) and 122-125 (NKID) contribute to the GTP site. The G4 stretch occupies residues 122 to 125 (NKID). The tract at residues 150–152 (ISA) is G5. In terms of domain architecture, KH type-2 spans 202–279 (LQQELPYKLT…HLFLFVKVHE (78 aa)).

This sequence belongs to the TRAFAC class TrmE-Era-EngA-EngB-Septin-like GTPase superfamily. Era GTPase family. In terms of assembly, monomer.

Its subcellular location is the cytoplasm. It localises to the cell inner membrane. An essential GTPase that binds both GDP and GTP, with rapid nucleotide exchange. Plays a role in 16S rRNA processing and 30S ribosomal subunit biogenesis and possibly also in cell cycle regulation and energy metabolism. This Rickettsia akari (strain Hartford) protein is GTPase Era.